The chain runs to 261 residues: MDGKLRADEVAVTKSILKSTFNMWMDIIDVDVVIVGAGPSGLTAAKYLAQKGFKTVVLERHLSFGGGTWGGGMGFPNIVVEKPADDILREAGIKLDEVDGEEELFTADSVEVPAKLGVAAIDAGAKILTGIVVEDLILKEDKIAGVVIQSYAIEKAGLHIDPLTISAKYVIDSTGHDASAVHTLARKNKDLGIEVPGEKSMWAEKGENSLTRNTREIFPGLYVCGMAANAYHAGYRMGAIFGGMYLSGKKCAEMILEKMEK.

NAD(+) is bound by residues Ser-40, 59 to 60 (ER), Gly-67, Val-133, and 159 to 161 (HID). Fe cation-binding residues include Asp-161 and His-176. NAD(+)-binding residues include Ser-179 and Met-226. Position 236 (Arg-236) interacts with glycine.

Belongs to the THI4 family. As to quaternary structure, homooctamer; tetramer of dimers. The cofactor is Fe(2+).

It catalyses the reaction hydrogen sulfide + glycine + NAD(+) = ADP-5-ethyl-4-methylthiazole-2-carboxylate + nicotinamide + 3 H2O + H(+). It participates in cofactor biosynthesis; thiamine diphosphate biosynthesis. Involved in the biosynthesis of the thiazole moiety of thiamine. Catalyzes the conversion of NAD and glycine to adenosine diphosphate 5-(2-hydroxyethyl)-4-methylthiazole-2-carboxylate (ADT), an adenylated thiazole intermediate, using free sulfide as a source of sulfur. The protein is Thiamine thiazole synthase of Methanococcus maripaludis (strain C6 / ATCC BAA-1332).